The primary structure comprises 151 residues: Protein SprT-like (151 aa).

One can recognise a SprT-like domain in the interval 6–148 (LQALVERISL…FCRGKLKKIK (143 aa)). His67 contacts Zn(2+). The active site involves Glu68. His71 lines the Zn(2+) pocket.

Belongs to the SprT family. It depends on Zn(2+) as a cofactor.

Its subcellular location is the cytoplasm. This Anoxybacillus flavithermus (strain DSM 21510 / WK1) protein is Protein SprT-like.